Reading from the N-terminus, the 591-residue chain is UvrABC system protein C (591 aa).

The GIY-YIG domain occupies 14 to 91 (DSPGCYLHKD…IQKNMPKYNI (78 aa)). One can recognise a UVR domain in the interval 196-231 (DKIVTGLKEKMLAASQAMEFERAAEYRDLISGIATL).

It belongs to the UvrC family. In terms of assembly, interacts with UvrB in an incision complex.

Its subcellular location is the cytoplasm. Functionally, the UvrABC repair system catalyzes the recognition and processing of DNA lesions. UvrC both incises the 5' and 3' sides of the lesion. The N-terminal half is responsible for the 3' incision and the C-terminal half is responsible for the 5' incision. In Streptococcus uberis (strain ATCC BAA-854 / 0140J), this protein is UvrABC system protein C.